The primary structure comprises 256 residues: Thiazole synthase (256 aa).

Catalysis depends on Lys-95, which acts as the Schiff-base intermediate with DXP. Residues Gly-156, Ala-182–Gly-183, and Asn-204–Thr-205 each bind 1-deoxy-D-xylulose 5-phosphate.

Belongs to the ThiG family. Homotetramer. Forms heterodimers with either ThiH or ThiS.

The protein resides in the cytoplasm. It catalyses the reaction [ThiS sulfur-carrier protein]-C-terminal-Gly-aminoethanethioate + 2-iminoacetate + 1-deoxy-D-xylulose 5-phosphate = [ThiS sulfur-carrier protein]-C-terminal Gly-Gly + 2-[(2R,5Z)-2-carboxy-4-methylthiazol-5(2H)-ylidene]ethyl phosphate + 2 H2O + H(+). Its pathway is cofactor biosynthesis; thiamine diphosphate biosynthesis. Catalyzes the rearrangement of 1-deoxy-D-xylulose 5-phosphate (DXP) to produce the thiazole phosphate moiety of thiamine. Sulfur is provided by the thiocarboxylate moiety of the carrier protein ThiS. In vitro, sulfur can be provided by H(2)S. In Salmonella paratyphi A (strain ATCC 9150 / SARB42), this protein is Thiazole synthase.